The primary structure comprises 256 residues: 5'-nucleotidase SurE (256 aa).

4 residues coordinate a divalent metal cation: Asp8, Asp9, Ser40, and Asn92.

Belongs to the SurE nucleotidase family. Requires a divalent metal cation as cofactor.

The protein resides in the cytoplasm. It carries out the reaction a ribonucleoside 5'-phosphate + H2O = a ribonucleoside + phosphate. Functionally, nucleotidase that shows phosphatase activity on nucleoside 5'-monophosphates. The chain is 5'-nucleotidase SurE from Sinorhizobium fredii (strain NBRC 101917 / NGR234).